A 414-amino-acid polypeptide reads, in one-letter code: WD repeat-containing protein jip5 (414 aa).

5 WD repeats span residues Pro9 to Asp48, Arg73 to Lys112, Ala118 to Ser159, Val222 to Glu263, and Asp319 to Asp356. The interval Arg39–Ile65 is disordered. Residues Val357–Asp414 form a disordered region. A compositionally biased stretch (acidic residues) spans Asp369–Glu383. Residues Arg394–Gly403 show a composition bias toward basic residues.

This sequence belongs to the WD repeat WDR55 family.

The protein localises to the nucleus. It localises to the nucleolus. This Aspergillus clavatus (strain ATCC 1007 / CBS 513.65 / DSM 816 / NCTC 3887 / NRRL 1 / QM 1276 / 107) protein is WD repeat-containing protein jip5 (jip5).